A 389-amino-acid polypeptide reads, in one-letter code: UDP-N-acetylglucosamine--N-acetylmuramyl-(pentapeptide) pyrophosphoryl-undecaprenol N-acetylglucosamine transferase (389 aa).

UDP-N-acetyl-alpha-D-glucosamine contacts are provided by residues 17–19 (TAG), N137, R179, S213, and Q308.

It belongs to the glycosyltransferase 28 family. MurG subfamily.

It localises to the cell membrane. It carries out the reaction di-trans,octa-cis-undecaprenyl diphospho-N-acetyl-alpha-D-muramoyl-L-alanyl-D-glutamyl-meso-2,6-diaminopimeloyl-D-alanyl-D-alanine + UDP-N-acetyl-alpha-D-glucosamine = di-trans,octa-cis-undecaprenyl diphospho-[N-acetyl-alpha-D-glucosaminyl-(1-&gt;4)]-N-acetyl-alpha-D-muramoyl-L-alanyl-D-glutamyl-meso-2,6-diaminopimeloyl-D-alanyl-D-alanine + UDP + H(+). The protein operates within cell wall biogenesis; peptidoglycan biosynthesis. Cell wall formation. Catalyzes the transfer of a GlcNAc subunit on undecaprenyl-pyrophosphoryl-MurNAc-pentapeptide (lipid intermediate I) to form undecaprenyl-pyrophosphoryl-MurNAc-(pentapeptide)GlcNAc (lipid intermediate II). This chain is UDP-N-acetylglucosamine--N-acetylmuramyl-(pentapeptide) pyrophosphoryl-undecaprenol N-acetylglucosamine transferase, found in Rhodococcus erythropolis (strain PR4 / NBRC 100887).